Here is a 186-residue protein sequence, read N- to C-terminus: Potassium-transporting ATPase KdpC subunit (186 aa).

Residues 10–30 (LTIITMVLCGFLFPLAITLIG) traverse the membrane as a helical segment.

Belongs to the KdpC family. As to quaternary structure, the system is composed of three essential subunits: KdpA, KdpB and KdpC.

The protein localises to the cell membrane. Functionally, part of the high-affinity ATP-driven potassium transport (or Kdp) system, which catalyzes the hydrolysis of ATP coupled with the electrogenic transport of potassium into the cytoplasm. This subunit acts as a catalytic chaperone that increases the ATP-binding affinity of the ATP-hydrolyzing subunit KdpB by the formation of a transient KdpB/KdpC/ATP ternary complex. This Staphylococcus aureus (strain MSSA476) protein is Potassium-transporting ATPase KdpC subunit.